The sequence spans 288 residues: uncharacterized protein (288 aa).

The HTH lysR-type domain maps to 1–59 (MDKLNAISIFCKVIETQSFTLAAKQQNISVAMASKLVSQLEEHLKTRLLQRTTRKIMPT). A DNA-binding region (H-T-H motif) is located at residues 19–38 (FTLAAKQQNISVAMASKLVS).

Belongs to the LysR transcriptional regulatory family.

This is an uncharacterized protein from Haemophilus influenzae (strain ATCC 51907 / DSM 11121 / KW20 / Rd).